The chain runs to 253 residues: GTP cyclohydrolase III (253 aa).

It belongs to the archaeal-type GTP cyclohydrolase family.

It catalyses the reaction GTP + 3 H2O = 2-amino-5-formylamino-6-(5-phospho-D-ribosylamino)pyrimidin-4(3H)-one + 2 phosphate + 2 H(+). Functionally, catalyzes the formation of 2-amino-5-formylamino-6-ribofuranosylamino-4(3H)-pyrimidinone ribonucleotide monophosphate and inorganic phosphate from GTP. Also has an independent pyrophosphate phosphohydrolase activity. The sequence is that of GTP cyclohydrolase III from Natronomonas pharaonis (strain ATCC 35678 / DSM 2160 / CIP 103997 / JCM 8858 / NBRC 14720 / NCIMB 2260 / Gabara) (Halobacterium pharaonis).